The following is a 2282-amino-acid chain: Zonadhesin (2282 aa).

MAM domains lie at 1–147 and 150–315; these read MFFA…PCGE and PQCV…TCHV. Topologically, residues 1–2235 are extracellular; the sequence is MFFATGRASA…VLLPPKPDTS (2235 aa). Residues N112 and N272 are each glycosylated (N-linked (GlcNAc...) asparagine). Residues 315 to 498 are 26 X approximate heptapeptide repeats (mucin-like domain); sequence VPVPPVIPIK…STTTTPSPTT (184 aa). The segment covering 333–356 has biased composition (low complexity); the sequence is PTVPAEGTTEPPEGTIELPEGTTK. A disordered region spans residues 333-495; the sequence is PTVPAEGTTE…TTLSTTTTPS (163 aa). Over residues 360–369 the composition is skewed to acidic residues; it reads ETTELPEEIT. A compositionally biased stretch (pro residues) spans 379–398; it reads TEPPTVPTEPPTVPTEPPTV. Low complexity-rich tracts occupy residues 399–420 and 427–495; these read PTEKPTVLTEKPTVPTEETSIP and PTEK…TTPS. Positions 501-550 constitute a TIL 1 domain; that stretch reads CPANAHYESCACPASCKHPKASCKPPCQPGCVCDPGLVFSNNSCIKASSC. N541 and N569 each carry an N-linked (GlcNAc...) asparagine glycan. A VWFC 1 domain is found at 551 to 605; it reads PCLYNNNNYEPEAEWFSPNCTELCHCWPGGRIECQISQCKTHTKCQLKNGQYECQ. The 178-residue stretch at 610-787 folds into the VWFD 1 domain; that stretch reads ATCFVYGDPH…WAQDEDKECQ (178 aa). 2 disulfide bridges follow: C612-C747 and C634-C786. The region spanning 881–934 is the TIL 2 domain; sequence CPPNSRYSLCTSPCPKTCHTGYVGMPCPEQCLEGCECNPGFILSGLECVPSAQC. The VWFC 2 domain maps to 935-990; sequence GCLDPSRGYFKVGEQWFKSDCKQLCICEGSNQIRCQPWKCGPHEVCSQQSGIYGCH. The 182-residue stretch at 995–1176 folds into the VWFD 2 domain; it reads ATCSASGDPH…LEEGSETGCF (182 aa). Cystine bridges form between C997–C1136 and C1019–C1175. N1141, N1259, N1270, N1355, N1467, and N1483 each carry an N-linked (GlcNAc...) asparagine glycan. The region spanning 1267 to 1322 is the TIL 3 domain; sequence CPPNSSYSPCGSPCPGTCLSLNHPKDCPITLPCVEGCECQNGYILSGTSCVPLNQC. The VWFC 3 domain maps to 1323–1379; the sequence is GCTDFEGSYHLVRESWYTDNTCSRLCTCSLHNNITCRQTACKPGQQCWAVDGLLRCR. The 181-residue stretch at 1384 to 1564 folds into the VWFD 3 domain; that stretch reads GVCQVTGDSR…KDNNIDPNCQ (181 aa). Intrachain disulfides connect C1386–C1525 and C1408–C1563. A disordered region spans residues 1561–1588; the sequence is PNCQKSQEGKGKPQEEQGPSGSSKKASC. Residues 1577-1586 are compositionally biased toward polar residues; sequence QGPSGSSKKA. The N-linked (GlcNAc...) asparagine glycan is linked to N1662. The TIL 4 domain maps to 1670-1726; it reads CPAYSTYTNCLPSCSPSCFDPDGRCEGARAPSSCAEGCTCQPGYVLSKNKCVAKDQC. The region spanning 1727–1782 is the VWFC 4 domain; it reads SCRDAQGGSIPSGKSWVSSGCSQKCACTEGSIQCRAFHCPSRSHCKLNSNGNSNCV. One can recognise a VWFD 4 domain in the interval 1787 to 1963; it reads DQCSIFGGPH…SWEVKTEDSV (177 aa). A disulfide bond links C1789 and C1926. N1997 is a glycosylation site (N-linked (GlcNAc...) asparagine). One can recognise a TIL 5 domain in the interval 2076 to 2129; it reads CPANTVYQSCMTPCPESCANLAAPRDCEGPCVEGCASLPGYAFSGAQSLPLANC. Residues 2130-2184 enclose the VWFC 5 domain; the sequence is GCTSNGIYYQLGHSFVTADCSQRCTCASSGVLLCEPFSCRPGESCTLGNLTRGCF. An N-linked (GlcNAc...) asparagine glycan is attached at N2178. Residues 2185 to 2221 form the EGF-like domain; it reads RESPCLRNPCQNDGRCREQGTSFTCECEPGYGGHLCT. Intrachain disulfides connect C2189–C2200, C2194–C2209, and C2211–C2220. The chain crosses the membrane as a helical span at residues 2236–2256; it reads NLVAILLGMLVSLVVTVPVLA. Residues 2257–2282 are Cytoplasmic-facing; it reads RKCVSRKRRRWREKTQSEPRSAPGRR.

In terms of assembly, probably forms covalent oligomers.

Its subcellular location is the cell membrane. Binds in a species-specific manner to the zona pellucida of the egg. May be involved in gamete recognition and/or signaling. The chain is Zonadhesin (ZAN) from Oryctolagus cuniculus (Rabbit).